Reading from the N-terminus, the 348-residue chain is Type II methyltransferase M.BglI (348 aa).

The protein belongs to the N(4)/N(6)-methyltransferase family.

The enzyme catalyses a 2'-deoxycytidine in DNA + S-adenosyl-L-methionine = an N(4)-methyl-2'-deoxycytidine in DNA + S-adenosyl-L-homocysteine + H(+). In terms of biological role, a beta subtype methylase, recognizes the double-stranded sequence 5'-GCCNNNNNGGC-3', methylates C-2 on both strands, and protects the DNA from cleavage by the BglI endonuclease. The sequence is that of Type II methyltransferase M.BglI (bglIM) from Bacillus subtilis.